The following is a 415-amino-acid chain: Serine hydroxymethyltransferase (415 aa).

(6S)-5,6,7,8-tetrahydrofolate-binding positions include Leu117 and Gly121 to Leu123. The residue at position 225 (Lys225) is an N6-(pyridoxal phosphate)lysine. (6S)-5,6,7,8-tetrahydrofolate contacts are provided by residues Glu241 and Ser349–Phe351.

The protein belongs to the SHMT family. In terms of assembly, homodimer. Pyridoxal 5'-phosphate serves as cofactor.

The protein resides in the cytoplasm. The catalysed reaction is (6R)-5,10-methylene-5,6,7,8-tetrahydrofolate + glycine + H2O = (6S)-5,6,7,8-tetrahydrofolate + L-serine. It functions in the pathway one-carbon metabolism; tetrahydrofolate interconversion. It participates in amino-acid biosynthesis; glycine biosynthesis; glycine from L-serine: step 1/1. Catalyzes the reversible interconversion of serine and glycine with tetrahydrofolate (THF) serving as the one-carbon carrier. This reaction serves as the major source of one-carbon groups required for the biosynthesis of purines, thymidylate, methionine, and other important biomolecules. Also exhibits THF-independent aldolase activity toward beta-hydroxyamino acids, producing glycine and aldehydes, via a retro-aldol mechanism. This chain is Serine hydroxymethyltransferase, found in Campylobacter hominis (strain ATCC BAA-381 / DSM 21671 / CCUG 45161 / LMG 19568 / NCTC 13146 / CH001A).